The sequence spans 508 residues: Probable protein kinase UbiB (508 aa).

A Protein kinase domain is found at 118 to 494 (DFDLKPVASA…QKRQNFLLLL (377 aa)). ATP contacts are provided by residues 124 to 132 (VASASVAQV) and Lys-151. Asp-286 acts as the Proton acceptor in catalysis. A helical transmembrane segment spans residues 488 to 508 (QNFLLLLIAILLAALLAKSLL).

It belongs to the ABC1 family. UbiB subfamily.

The protein localises to the cell inner membrane. The protein operates within cofactor biosynthesis; ubiquinone biosynthesis [regulation]. In terms of biological role, is probably a protein kinase regulator of UbiI activity which is involved in aerobic coenzyme Q (ubiquinone) biosynthesis. This is Probable protein kinase UbiB from Chromobacterium violaceum (strain ATCC 12472 / DSM 30191 / JCM 1249 / CCUG 213 / NBRC 12614 / NCIMB 9131 / NCTC 9757 / MK).